The sequence spans 1888 residues: E3 ubiquitin-protein ligase UBR3 (1888 aa).

The segment at 1–24 is disordered; sequence MAAAAAAAVGGQQPSQPELPAPGL. The UBR-type zinc finger occupies 118–189; sequence ALCGLVWTAN…ESGFCKRHQI (72 aa). Positions 339 to 362 are disordered; the sequence is GQVDSSDEDDQDGSQGLGKRKRVK. A phosphoserine mark is found at Ser-343 and Ser-344. Helical transmembrane passes span 761-781 and 919-939; these read MLEG…HLGM and LLHC…ILMD. Disordered regions lie at residues 1008 to 1028 and 1164 to 1186; these read APEV…GSLQ and VPPK…RQKA. Residues 1016–1028 show a composition bias toward polar residues; sequence PASTSSDNLGSLQ. Positions 1168 to 1199 form a coiled coil; that stretch reads KVTAAEKKTLDKEERRQKARERQQKLLAEFAS. Basic and acidic residues predominate over residues 1170–1186; the sequence is TAAEKKTLDKEERRQKA. At Ser-1199 the chain carries Phosphoserine. An RING-type; degenerate zinc finger spans residues 1306–1364; that stretch reads DSSCLLAVSIGWEGGVYVQTCGHTLHIDCHKSYMESLRNDQVLQGFSVDKGEFTCPLCR. Residues 1806–1826 traverse the membrane as a helical segment; it reads QNCGAGTGIFLLINASVIIII.

It belongs to the E3 ubiquitin-protein ligase UBR1-like family. As to quaternary structure, interacts with UBE2A and UBE2B.

It is found in the membrane. The enzyme catalyses S-ubiquitinyl-[E2 ubiquitin-conjugating enzyme]-L-cysteine + [acceptor protein]-L-lysine = [E2 ubiquitin-conjugating enzyme]-L-cysteine + N(6)-ubiquitinyl-[acceptor protein]-L-lysine.. It participates in protein modification; protein ubiquitination. Its function is as follows. E3 ubiquitin-protein ligase which is a component of the N-end rule pathway. Does not bind to proteins bearing specific N-terminal residues that are destabilizing according to the N-end rule, leading to their ubiquitination and subsequent degradation. May play a role in Shh signaling by mediating the ubiquitination of Kif7. May be important for MYH9 function in certain tissues, possibly by regulating the ubiquitination of MYH9 and consequently affecting its interaction with MYO7A. The protein is E3 ubiquitin-protein ligase UBR3 (UBR3) of Homo sapiens (Human).